We begin with the raw amino-acid sequence, 244 residues long: tRNA (guanine-N(1)-)-methyltransferase (244 aa).

Residues G112 and 131–136 (LGDFIL) each bind S-adenosyl-L-methionine. The tract at residues 211 to 244 (IKRTSDRRPDLLEKWQQEKKPGSREQGSREQGEK) is disordered.

It belongs to the RNA methyltransferase TrmD family. In terms of assembly, homodimer.

It localises to the cytoplasm. It catalyses the reaction guanosine(37) in tRNA + S-adenosyl-L-methionine = N(1)-methylguanosine(37) in tRNA + S-adenosyl-L-homocysteine + H(+). Specifically methylates guanosine-37 in various tRNAs. The protein is tRNA (guanine-N(1)-)-methyltransferase of Trichormus variabilis (strain ATCC 29413 / PCC 7937) (Anabaena variabilis).